A 365-amino-acid chain; its full sequence is Aminomethyltransferase (365 aa).

The protein belongs to the GcvT family. As to quaternary structure, the glycine cleavage system is composed of four proteins: P, T, L and H.

The enzyme catalyses N(6)-[(R)-S(8)-aminomethyldihydrolipoyl]-L-lysyl-[protein] + (6S)-5,6,7,8-tetrahydrofolate = N(6)-[(R)-dihydrolipoyl]-L-lysyl-[protein] + (6R)-5,10-methylene-5,6,7,8-tetrahydrofolate + NH4(+). Functionally, the glycine cleavage system catalyzes the degradation of glycine. This chain is Aminomethyltransferase, found in Chlorobium phaeovibrioides (strain DSM 265 / 1930) (Prosthecochloris vibrioformis (strain DSM 265)).